We begin with the raw amino-acid sequence, 486 residues long: Vicilin-like seed storage protein At3g22640 (486 aa).

The signal sequence occupies residues 1–22 (MAITNKLIITLLLLISIAVVHC). The disordered stretch occupies residues 34-60 (PPQQGEQEGPRRRPGGGSGEGWEEEST). Cupin type-1 domains lie at 64–223 (YHFR…ELLG) and 278–448 (FNLF…KVAE). N-linked (GlcNAc...) asparagine glycosylation is found at asparagine 168, asparagine 316, and asparagine 455.

The protein belongs to the 7S seed storage protein family. As to expression, predominantly expressed in the embryo and endosperm of developing seeds. Also present in seedlings.

Seed storage protein. Functionally, (Microbial infection) Involved in tobacco mosaic virus (TMV) replication. Required for endoplasmic reticulum (ER) aggregations mediated by TMV main replicase (P126) upon viral infection. The polypeptide is Vicilin-like seed storage protein At3g22640 (Arabidopsis thaliana (Mouse-ear cress)).